Consider the following 624-residue polypeptide: uncharacterized protein (624 aa).

The interval 113-249 (SINVRTSATT…RFHPVTDINK (137 aa)) is disordered. A compositionally biased stretch (low complexity) spans 118–225 (TSATTTESTN…ATTTESTNAS (108 aa)). Positions 226 to 249 (AKEDANKDGNAEDNRFHPVTDINK) are enriched in basic and acidic residues.

This is an uncharacterized protein from Saccharomyces cerevisiae (strain ATCC 204508 / S288c) (Baker's yeast).